A 264-amino-acid polypeptide reads, in one-letter code: S-adenosylmethionine decarboxylase proenzyme (264 aa).

Ser112 (schiff-base intermediate with substrate; via pyruvic acid) is an active-site residue. Position 112 is a pyruvic acid (Ser); by autocatalysis (Ser112). The Proton acceptor; for processing activity role is filled by His117. The active-site Proton donor; for catalytic activity is the Cys140.

The protein belongs to the prokaryotic AdoMetDC family. Type 2 subfamily. Heterooctamer of four alpha and four beta chains arranged as a tetramer of alpha/beta heterodimers. The cofactor is pyruvate. Is synthesized initially as an inactive proenzyme. Formation of the active enzyme involves a self-maturation process in which the active site pyruvoyl group is generated from an internal serine residue via an autocatalytic post-translational modification. Two non-identical subunits are generated from the proenzyme in this reaction, and the pyruvate is formed at the N-terminus of the alpha chain, which is derived from the carboxyl end of the proenzyme. The post-translation cleavage follows an unusual pathway, termed non-hydrolytic serinolysis, in which the side chain hydroxyl group of the serine supplies its oxygen atom to form the C-terminus of the beta chain, while the remainder of the serine residue undergoes an oxidative deamination to produce ammonia and the pyruvoyl group blocking the N-terminus of the alpha chain.

It catalyses the reaction S-adenosyl-L-methionine + H(+) = S-adenosyl 3-(methylsulfanyl)propylamine + CO2. It functions in the pathway amine and polyamine biosynthesis; S-adenosylmethioninamine biosynthesis; S-adenosylmethioninamine from S-adenosyl-L-methionine: step 1/1. Its function is as follows. Catalyzes the decarboxylation of S-adenosylmethionine to S-adenosylmethioninamine (dcAdoMet), the propylamine donor required for the synthesis of the polyamines spermine and spermidine from the diamine putrescine. The protein is S-adenosylmethionine decarboxylase proenzyme of Yersinia enterocolitica serotype O:8 / biotype 1B (strain NCTC 13174 / 8081).